We begin with the raw amino-acid sequence, 304 residues long: tRNA uridine(34) hydroxylase (304 aa).

Residues 124 to 219 (QDEETLLIDT…YLETIPKEES (96 aa)) enclose the Rhodanese domain. Residue Cys-179 is the Cysteine persulfide intermediate of the active site.

The protein belongs to the TrhO family.

The enzyme catalyses uridine(34) in tRNA + AH2 + O2 = 5-hydroxyuridine(34) in tRNA + A + H2O. Functionally, catalyzes oxygen-dependent 5-hydroxyuridine (ho5U) modification at position 34 in tRNAs. The chain is tRNA uridine(34) hydroxylase from Bartonella quintana (strain Toulouse) (Rochalimaea quintana).